The sequence spans 243 residues: UPF0246 protein MGAS9429_Spy1799 (243 aa).

The protein belongs to the UPF0246 family.

This chain is UPF0246 protein MGAS9429_Spy1799, found in Streptococcus pyogenes serotype M12 (strain MGAS9429).